Consider the following 770-residue polypeptide: U3 small nucleolar RNA-associated protein 14 homolog A (770 aa).

A compositionally biased stretch (polar residues) spans 1 to 17 (MNANQAAESNLLASNQQ). The interval 1–65 (MNANQAAESN…GKDRQKLADR (65 aa)) is disordered. Phosphoserine occurs at positions 30, 32, and 53. Residues 41-68 (ERKHQKLLESISSLNGKDRQKLADRSEA) are a coiled coil. A compositionally biased stretch (basic and acidic residues) spans 56–65 (GKDRQKLADR). Phosphoserine is present on residues Ser-78 and Ser-82. Phosphothreonine is present on Thr-206. Coiled-coil stretches lie at residues 217–291 (SLEE…DKAR) and 318–348 (LEAR…EEEG). Disordered stretches follow at residues 334–361 (LTQK…LVPD), 392–455 (KDLE…SSQE), and 467–505 (LRTE…RPER). 2 stretches are compositionally biased toward acidic residues: residues 343-358 (ESEE…EEPL) and 396-410 (DPAE…ESEE). A phosphoserine mark is found at Ser-406 and Ser-408. Positions 411–444 (EKAVVEEETLLKEFEERRSLRQKSELNHMAEPVH) are enriched in basic and acidic residues. Lys-449 is covalently cross-linked (Glycyl lysine isopeptide (Lys-Gly) (interchain with G-Cter in SUMO2)). Position 453 is a phosphoserine (Ser-453). A Phosphoserine modification is found at Ser-567. The residue at position 588 (Arg-588) is a Citrulline. Residue Lys-732 forms a Glycyl lysine isopeptide (Lys-Gly) (interchain with G-Cter in SUMO2) linkage.

This sequence belongs to the UTP14 family. As to quaternary structure, interacts with DHX37. Post-translationally, citrullinated by PADI4.

The protein resides in the nucleus. The protein localises to the nucleolus. Functionally, may be required for ribosome biogenesis. This Bos taurus (Bovine) protein is U3 small nucleolar RNA-associated protein 14 homolog A (UTP14A).